We begin with the raw amino-acid sequence, 416 residues long: MGSTIVEKIFSRKCGSDIKAGEVVMAPIDGAMIHDITGPLAIRKFYEMGGKQVFDPKSVIMLFDHQIPADSLEAAENHVFMRKFAAEQGIHNYDINEGVCHQVVLEKGRAAPGEIVVGADSHTCMYGAVGAFATGIGSTDMGFALKFGALYFKVPETVRAEISGKFQKRVGAKDLILSIAADIGADGATYQAIEFTGKTISKMDMAGRMTCCNMAIEMGAKAGIVPPDKVTWEYMKGRRKITPFALASDDDAKFAEKRTYNVADLEPQVAVPHNVDQGIPVGKVEGTHIDQVFIGSCTNGRYEDLVEAAEVLGKKKFDPKVRVLVIPASRDEYLKALEAGLVERFVRAGALVEAPCCGPCMGGSFGLIAAGEVSLATSNRNFRGRQGSTEGKVYLCSPATAAASAIKGEITDPREV.

The [4Fe-4S] cluster site is built by Cys-297, Cys-357, and Cys-360.

It belongs to the aconitase/IPM isomerase family. LeuC type 2 subfamily. Heterodimer of LeuC and LeuD. Requires [4Fe-4S] cluster as cofactor.

The catalysed reaction is (2R,3S)-3-isopropylmalate = (2S)-2-isopropylmalate. Its pathway is amino-acid biosynthesis; L-leucine biosynthesis; L-leucine from 3-methyl-2-oxobutanoate: step 2/4. Catalyzes the isomerization between 2-isopropylmalate and 3-isopropylmalate, via the formation of 2-isopropylmaleate. The sequence is that of 3-isopropylmalate dehydratase large subunit from Methanoregula boonei (strain DSM 21154 / JCM 14090 / 6A8).